The primary structure comprises 685 residues: Threonine--tRNA ligase (685 aa).

Residues 1-65 (MSTPASAAPA…DTDVEVEPVA (65 aa)) enclose the TGS domain. The interval 262–568 (DHRKLGSELD…LTEHYAGAFP (307 aa)) is catalytic. Cysteine 367, histidine 418, and histidine 545 together coordinate Zn(2+).

Belongs to the class-II aminoacyl-tRNA synthetase family. In terms of assembly, homodimer. Zn(2+) is required as a cofactor.

The protein localises to the cytoplasm. It carries out the reaction tRNA(Thr) + L-threonine + ATP = L-threonyl-tRNA(Thr) + AMP + diphosphate + H(+). In terms of biological role, catalyzes the attachment of threonine to tRNA(Thr) in a two-step reaction: L-threonine is first activated by ATP to form Thr-AMP and then transferred to the acceptor end of tRNA(Thr). Also edits incorrectly charged L-seryl-tRNA(Thr). The chain is Threonine--tRNA ligase from Rhodococcus jostii (strain RHA1).